A 376-amino-acid polypeptide reads, in one-letter code: Dehydrogenase/reductase SDR family member FEY (376 aa).

An N-acetylserine modification is found at S2. 61 to 85 is a binding site for NAD(+); that stretch reads VVTGSTSGIGRETARQLAEAGAHVV. S199 is a binding site for substrate. The active-site Proton acceptor is the Y227.

It belongs to the short-chain dehydrogenases/reductases (SDR) family. Expressed in roots, stems, leaves and flowers and, at lower levels, in siliques.

In terms of biological role, putative oxidoreductase. Required for vegetative shoot apex development, especially during leaf positioning and for shoot apical meristem (SAM) maintenance. The sequence is that of Dehydrogenase/reductase SDR family member FEY from Arabidopsis thaliana (Mouse-ear cress).